We begin with the raw amino-acid sequence, 373 residues long: Chaperone protein DnaJ (373 aa).

A J domain is found at 4-68 (NYYQILGVSK…QTRAAYDRLG (65 aa)). The CR-type zinc finger occupies 136–214 (GIEKNISFSS…CHGMGRYHKQ (79 aa)). Zn(2+) contacts are provided by Cys-149, Cys-152, Cys-166, Cys-169, Cys-188, Cys-191, Cys-202, and Cys-205. CXXCXGXG motif repeat units follow at residues 149–156 (CDTCHGSG), 166–173 (CDACSGVG), 188–195 (CHKCQGNG), and 202–209 (CKKCHGMG).

This sequence belongs to the DnaJ family. Homodimer. Zn(2+) is required as a cofactor.

It localises to the cytoplasm. In terms of biological role, participates actively in the response to hyperosmotic and heat shock by preventing the aggregation of stress-denatured proteins and by disaggregating proteins, also in an autonomous, DnaK-independent fashion. Unfolded proteins bind initially to DnaJ; upon interaction with the DnaJ-bound protein, DnaK hydrolyzes its bound ATP, resulting in the formation of a stable complex. GrpE releases ADP from DnaK; ATP binding to DnaK triggers the release of the substrate protein, thus completing the reaction cycle. Several rounds of ATP-dependent interactions between DnaJ, DnaK and GrpE are required for fully efficient folding. Also involved, together with DnaK and GrpE, in the DNA replication of plasmids through activation of initiation proteins. The protein is Chaperone protein DnaJ of Rickettsia peacockii (strain Rustic).